Here is a 598-residue protein sequence, read N- to C-terminus: Arginine--tRNA ligase (598 aa).

The short motif at 131–141 is the 'HIGH' region element; it reads ANPTGPMHVGH. The tract at residues 288–309 is disordered; the sequence is KLPPPKSKKGQPPPQAQPDEEG.

This sequence belongs to the class-I aminoacyl-tRNA synthetase family. As to quaternary structure, monomer.

The protein resides in the cytoplasm. It carries out the reaction tRNA(Arg) + L-arginine + ATP = L-arginyl-tRNA(Arg) + AMP + diphosphate. This Anaeromyxobacter dehalogenans (strain 2CP-C) protein is Arginine--tRNA ligase.